The sequence spans 331 residues: L-lactate dehydrogenase A chain (331 aa).

NAD(+) is bound by residues 29 to 57 and Arg-98; that span reads GMVG…MEDK. Residues Arg-105, Asn-137, and Arg-168 each contribute to the substrate site. Asn-137 serves as a coordination point for NAD(+). His-192 (proton acceptor) is an active-site residue. Thr-247 contributes to the substrate binding site.

It belongs to the LDH/MDH superfamily. LDH family. As to quaternary structure, homotetramer.

It is found in the cytoplasm. It catalyses the reaction (S)-lactate + NAD(+) = pyruvate + NADH + H(+). It participates in fermentation; pyruvate fermentation to lactate; (S)-lactate from pyruvate: step 1/1. Interconverts simultaneously and stereospecifically pyruvate and lactate with concomitant interconversion of NADH and NAD(+). In Harpagifer antarcticus (Antarctic spiny plunderfish), this protein is L-lactate dehydrogenase A chain (ldha).